The chain runs to 101 residues: Small ribosomal subunit protein uS10 (101 aa).

It belongs to the universal ribosomal protein uS10 family. In terms of assembly, part of the 30S ribosomal subunit.

In terms of biological role, involved in the binding of tRNA to the ribosomes. The polypeptide is Small ribosomal subunit protein uS10 (Parabacteroides distasonis (strain ATCC 8503 / DSM 20701 / CIP 104284 / JCM 5825 / NCTC 11152)).